We begin with the raw amino-acid sequence, 131 residues long: Two-component response regulator ORR3 (131 aa).

The Response regulatory domain occupies 12-129; sequence HVLAVDDSIV…DVSRLCNRVI (118 aa). Position 62 is a 4-aspartylphosphate (Asp-62).

It belongs to the ARR family. Type-A subfamily. In terms of processing, two-component system major event consists of a His-to-Asp phosphorelay between a sensor histidine kinase (HK) and a response regulator (RR). In plants, the His-to-Asp phosphorelay involves an additional intermediate named Histidine-containing phosphotransfer protein (HPt). This multistep phosphorelay consists of a His-Asp-His-Asp sequential transfer of a phosphate group between first a His and an Asp of the HK protein, followed by the transfer to a conserved His of the HPt protein and finally the transfer to an Asp in the receiver domain of the RR protein. In terms of tissue distribution, expressed in roots, mature leaves and flowers, and at low levels in shoots.

In terms of biological role, functions as a response regulator involved in His-to-Asp phosphorelay signal transduction system. Phosphorylation of the Asp residue in the receiver domain activates the ability of the protein to promote the transcription of target genes. Type-A response regulators seem to act as negative regulators of the cytokinin signaling. This chain is Two-component response regulator ORR3, found in Oryza sativa subsp. indica (Rice).